The primary structure comprises 283 residues: Acetylglutamate kinase (283 aa).

Residues 63–64 (GG), R85, and N178 contribute to the substrate site.

It belongs to the acetylglutamate kinase family. ArgB subfamily.

It localises to the cytoplasm. It carries out the reaction N-acetyl-L-glutamate + ATP = N-acetyl-L-glutamyl 5-phosphate + ADP. It participates in amino-acid biosynthesis; L-arginine biosynthesis; N(2)-acetyl-L-ornithine from L-glutamate: step 2/4. Functionally, catalyzes the ATP-dependent phosphorylation of N-acetyl-L-glutamate. The sequence is that of Acetylglutamate kinase from Prochlorococcus marinus (strain MIT 9215).